Here is a 132-residue protein sequence, read N- to C-terminus: uncharacterized protein (132 aa).

The first 24 residues, 1–24 (MVTIGSSSLVLFLFFVVFVQITYT), serve as a signal peptide directing secretion. Transmembrane regions (helical) follow at residues 75 to 95 (YVNV…ILGI) and 112 to 132 (ESAI…VYIH).

Its subcellular location is the membrane. This is an uncharacterized protein from Saccharomyces cerevisiae (strain ATCC 204508 / S288c) (Baker's yeast).